Here is a 331-residue protein sequence, read N- to C-terminus: Protein RecA (331 aa).

66–73 (GPESSGKT) is a binding site for ATP.

This sequence belongs to the RecA family.

Its subcellular location is the cytoplasm. In terms of biological role, can catalyze the hydrolysis of ATP in the presence of single-stranded DNA, the ATP-dependent uptake of single-stranded DNA by duplex DNA, and the ATP-dependent hybridization of homologous single-stranded DNAs. It interacts with LexA causing its activation and leading to its autocatalytic cleavage. The protein is Protein RecA of Acholeplasma laidlawii (strain PG-8A).